The primary structure comprises 96 residues: MPSSNGPMTGTRDKLSNSPRERGMSPPQRAIQEYDEGQKVHLRIDPSVREGRFHPRFNGHTGEVTGKQGRAFKIKIIDGGKEKTLIARPAHLRAQE.

The tract at residues 1–37 (MPSSNGPMTGTRDKLSNSPRERGMSPPQRAIQEYDEG) is disordered. Basic and acidic residues predominate over residues 11–23 (TRDKLSNSPRERG).

Belongs to the eukaryotic ribosomal protein eL21 family.

In Haloquadratum walsbyi (strain DSM 16790 / HBSQ001), this protein is Large ribosomal subunit protein eL21.